The chain runs to 516 residues: Nuclear speckle splicing regulatory protein 1 (516 aa).

4 disordered regions span residues 1–43 (MATS…GESL), 111–137 (ERKKEQERRDERKIQKEREAEGEKFAD), 151–170 (KERQEELEREKREAELEAAL), and 188–494 (QTVG…SSAR). Position 33 is a phosphoserine (S33). The stretch at 100-176 (KYINQLLRAV…EAALDVKKQK (77 aa)) forms a coiled coil. The segment covering 207-221 (TSSAAAERSPSPEST) has biased composition (low complexity). 2 stretches are compositionally biased toward basic and acidic residues: residues 222 to 239 (ANRRESEAESHSDDDQVD) and 271 to 466 (ERER…KLVE). Positions 358–401 (KGERDRRDNSPKDRERDRKGERDRRDNSPKDRERETRDKSPKDR) form a coiled coil.

It belongs to the NSRP1 family.

The sequence is that of Nuclear speckle splicing regulatory protein 1 (nsrp1) from Danio rerio (Zebrafish).